Here is a 62-residue protein sequence, read N- to C-terminus: Cytotoxin 6 (62 aa).

The first 2 residues, 1–2 (YT), serve as a signal peptide directing secretion. Intrachain disulfides connect Cys-5-Cys-23, Cys-16-Cys-40, Cys-44-Cys-55, and Cys-56-Cys-61.

The protein belongs to the three-finger toxin family. Short-chain subfamily. Type IA cytotoxin sub-subfamily. As to quaternary structure, monomer in solution; Homodimer and oligomer in the presence of negatively charged lipids forming a pore with a size ranging between 20 and 30 Angstroms. Expressed by the venom gland.

It is found in the secreted. The protein resides in the target cell membrane. Functionally, shows cytolytic activity on many different cells by forming pore in lipid membranes. In vivo, increases heart rate or kills the animal by cardiac arrest. In addition, it binds to heparin with high affinity, interacts with Kv channel-interacting protein 1 (KCNIP1) in a calcium-independent manner, and binds to integrin alpha-V/beta-3 (ITGAV/ITGB3) with moderate affinity. In Naja sputatrix (Malayan spitting cobra), this protein is Cytotoxin 6.